Here is a 329-residue protein sequence, read N- to C-terminus: Legumin type B (329 aa).

Disordered regions lie at residues 47–79 and 97–149; these read PETQEEQQERHQQKHSLPVGRRGGQHQQEEDGN and EEDT…GRNG. The segment covering 99–112 has biased composition (basic and acidic residues); the sequence is DTAKRLRSPRDKRN. A compositionally biased stretch (acidic residues) spans 129–138; the sequence is QQEEEEEEEE. The Cupin type-1 domain maps to 161–308; that stretch reads ENIAQPARAD…AFGLRQRQVT (148 aa).

It belongs to the 11S seed storage protein (globulins) family. Hexamer; each subunit is composed of an acidic and a basic chain derived from a single precursor and linked by a disulfide bond.

Its function is as follows. This protein found in the seeds of many leguminous and non-leguminous plants is the source of sulfur-containing amino acids in seed meals. This chain is Legumin type B (LEB6), found in Vicia faba (Broad bean).